Here is a 342-residue protein sequence, read N- to C-terminus: MKRVFLWLIFVLAFHKLLAEKIGDIASVVGVRDNQLIGYGLVIGLNGTGDKSGSKFTMQSISNMLESVNVKISADDIKSKNVAAVMITASLPPFARQGDKIDIHISSIGDAKSIQGGTLVMTPLNAVDGNIYALAQGAITSGNSNNLLSANIINGATIEREVSYDLFHKNAMVLSLKSPNFKNAIQVQNTLNKVFGNKVAIALDPKTIQITRPERFSMVEFLALVQEIPINYSAKNKIIVDEKSGTIISGVDIMVHPIVVTSQDITLKITKEPLNNSKNTQDLDNNMSLDTAHNTLSSNGKNITIAGVVKALQKIGVSAKGMVSILQALKKSGAISAEMEIL.

Residues 1–19 (MKRVFLWLIFVLAFHKLLA) form the signal peptide.

The protein belongs to the FlgI family. The basal body constitutes a major portion of the flagellar organelle and consists of four rings (L,P,S, and M) mounted on a central rod.

Its subcellular location is the periplasm. It is found in the bacterial flagellum basal body. Its function is as follows. Assembles around the rod to form the L-ring and probably protects the motor/basal body from shearing forces during rotation. The polypeptide is Flagellar P-ring protein (Helicobacter pylori (strain P12)).